The sequence spans 158 residues: NAD(P)H-quinone oxidoreductase subunit J, chloroplastic (158 aa).

The protein belongs to the complex I 30 kDa subunit family. NDH is composed of at least 16 different subunits, 5 of which are encoded in the nucleus.

The protein resides in the plastid. It localises to the chloroplast thylakoid membrane. The catalysed reaction is a plastoquinone + NADH + (n+1) H(+)(in) = a plastoquinol + NAD(+) + n H(+)(out). The enzyme catalyses a plastoquinone + NADPH + (n+1) H(+)(in) = a plastoquinol + NADP(+) + n H(+)(out). NDH shuttles electrons from NAD(P)H:plastoquinone, via FMN and iron-sulfur (Fe-S) centers, to quinones in the photosynthetic chain and possibly in a chloroplast respiratory chain. The immediate electron acceptor for the enzyme in this species is believed to be plastoquinone. Couples the redox reaction to proton translocation, and thus conserves the redox energy in a proton gradient. In Psilotum nudum (Whisk fern), this protein is NAD(P)H-quinone oxidoreductase subunit J, chloroplastic.